Here is a 323-residue protein sequence, read N- to C-terminus: Aldo-keto reductase family 1 member C23-like protein (323 aa).

20 to 24 (GFGTY) provides a ligand contact to NADP(+). Lys-31 is a binding site for substrate. Asp-50 lines the NADP(+) pocket. Tyr-55 functions as the Proton donor in the catalytic mechanism. Position 117 (His-117) interacts with substrate. Residues 166–167 (SN), Gln-190, 216–222 (YGALGTQ), and 270–280 (KSYNEKRIKEN) contribute to the NADP(+) site.

The protein belongs to the aldo/keto reductase family. As to quaternary structure, monomer. In terms of tissue distribution, detected in endometrium surface epithelium (at protein level). Detected in endometrium.

The protein resides in the cytoplasm. In terms of biological role, NADP-dependent oxidoreductase involved in steroid metabolism. May act on various hydroxysteroids. In Equus caballus (Horse), this protein is Aldo-keto reductase family 1 member C23-like protein (PGFS).